A 386-amino-acid chain; its full sequence is Innexin inx4 (386 aa).

The Cytoplasmic segment spans residues M1–D21. The chain crosses the membrane as a helical span at residues L22 to L42. The Extracellular segment spans residues S43–Y111. A helical membrane pass occupies residues Q112–W132. Residues K133–T187 are Cytoplasmic-facing. A helical membrane pass occupies residues L188–F208. At W209 to A272 the chain is on the extracellular side. The chain crosses the membrane as a helical span at residues F273–I293. Topologically, residues V294–V386 are cytoplasmic. The interval H358 to V386 is disordered. Over residues F374–V386 the composition is skewed to acidic residues.

This sequence belongs to the pannexin family.

It localises to the cell membrane. The protein localises to the cell junction. Its subcellular location is the gap junction. In terms of biological role, structural component of gap junctions. Required for normal development of ovary. Required for normal egg production after blood meal. Required for normal development of testis. Functionally, (Microbial infection) Modulates the development of Plasmodium falciparum oocysts. The sequence is that of Innexin inx4 from Anopheles gambiae (African malaria mosquito).